A 207-amino-acid chain; its full sequence is Large ribosomal subunit protein uL4 (207 aa).

It belongs to the universal ribosomal protein uL4 family. In terms of assembly, part of the 50S ribosomal subunit.

One of the primary rRNA binding proteins, this protein initially binds near the 5'-end of the 23S rRNA. It is important during the early stages of 50S assembly. It makes multiple contacts with different domains of the 23S rRNA in the assembled 50S subunit and ribosome. In terms of biological role, forms part of the polypeptide exit tunnel. In Erythrobacter litoralis (strain HTCC2594), this protein is Large ribosomal subunit protein uL4.